Consider the following 166-residue polypeptide: MVDHARARKMADRIKEIVARKLDRGIKDPRLGFVTVTDVRVTGDLQHASIFYTVYGTDEERADTAAALKSATGMLRSEVGKNITARLTPSLEFILDGVPENAAAIDALLEEARRRDADVQAQAKSGVYAGDEDPYVKPRVIGEDEDEDDEDGDDIDRSAPGYEPAH.

A disordered region spans residues 119–166; it reads VQAQAKSGVYAGDEDPYVKPRVIGEDEDEDDEDGDDIDRSAPGYEPAH. Residues 143–154 show a composition bias toward acidic residues; the sequence is EDEDEDDEDGDD.

The protein belongs to the RbfA family. Monomer. Binds 30S ribosomal subunits, but not 50S ribosomal subunits or 70S ribosomes.

Its subcellular location is the cytoplasm. Its function is as follows. One of several proteins that assist in the late maturation steps of the functional core of the 30S ribosomal subunit. Associates with free 30S ribosomal subunits (but not with 30S subunits that are part of 70S ribosomes or polysomes). Required for efficient processing of 16S rRNA. May interact with the 5'-terminal helix region of 16S rRNA. This is Ribosome-binding factor A from Clavibacter michiganensis subsp. michiganensis (strain NCPPB 382).